The sequence spans 1053 residues: Probable sucrose-phosphate synthase (1053 aa).

The span at 103–115 shows a compositional bias: basic and acidic residues; it reads RRQERERGRREAV. Disordered stretches follow at residues 103-127 and 673-693; these read RRQE…EGEK and LRSI…DSLR.

This sequence belongs to the glycosyltransferase 1 family. As to quaternary structure, homodimer or homotetramer.

It catalyses the reaction beta-D-fructose 6-phosphate + UDP-alpha-D-glucose = sucrose 6(F)-phosphate + UDP + H(+). It participates in glycan biosynthesis; sucrose biosynthesis; sucrose from D-fructose 6-phosphate and UDP-alpha-D-glucose: step 1/2. Activity is regulated by phosphorylation and moderated by concentration of metabolites and light. In terms of biological role, plays a role in photosynthetic sucrose synthesis by catalyzing the rate-limiting step of sucrose biosynthesis from UDP-glucose and fructose- 6-phosphate. Involved in the regulation of carbon partitioning in the leaves of plants. May regulate the synthesis of sucrose and therefore play a major role as a limiting factor in the export of photoassimilates out of the leaf. Plays a role for sucrose availability that is essential for plant growth and fiber elongation. This chain is Probable sucrose-phosphate synthase (SPS), found in Solanum tuberosum (Potato).